Reading from the N-terminus, the 214-residue chain is Adenylate kinase (214 aa).

Residue Gly-10–Thr-15 coordinates ATP. The segment at Ser-30–Val-59 is NMP. AMP-binding positions include Thr-31, Arg-36, Gln-57 to Val-59, Gly-85 to Arg-88, and Gln-92. Residues Gly-122 to Asp-159 form an LID region. ATP contacts are provided by residues Arg-123 and Val-132–Tyr-133. AMP is bound by residues Arg-156 and Arg-167. Position 200 (Gln-200) interacts with ATP.

This sequence belongs to the adenylate kinase family. Monomer.

It localises to the cytoplasm. The catalysed reaction is AMP + ATP = 2 ADP. It functions in the pathway purine metabolism; AMP biosynthesis via salvage pathway; AMP from ADP: step 1/1. Functionally, catalyzes the reversible transfer of the terminal phosphate group between ATP and AMP. Plays an important role in cellular energy homeostasis and in adenine nucleotide metabolism. This is Adenylate kinase from Colwellia psychrerythraea (strain 34H / ATCC BAA-681) (Vibrio psychroerythus).